Reading from the N-terminus, the 350-residue chain is Anthranilate phosphoribosyltransferase (350 aa).

5-phospho-alpha-D-ribose 1-diphosphate-binding positions include G94, 97-98 (GD), T102, 104-107 (NVST), 122-130 (KHGNRSVSS), and S134. Residue G94 coordinates anthranilate. Residue S106 coordinates Mg(2+). N125 is a binding site for anthranilate. R180 lines the anthranilate pocket. Positions 239 and 240 each coordinate Mg(2+).

Belongs to the anthranilate phosphoribosyltransferase family. In terms of assembly, homodimer. It depends on Mg(2+) as a cofactor.

The catalysed reaction is N-(5-phospho-beta-D-ribosyl)anthranilate + diphosphate = 5-phospho-alpha-D-ribose 1-diphosphate + anthranilate. It participates in amino-acid biosynthesis; L-tryptophan biosynthesis; L-tryptophan from chorismate: step 2/5. Catalyzes the transfer of the phosphoribosyl group of 5-phosphorylribose-1-pyrophosphate (PRPP) to anthranilate to yield N-(5'-phosphoribosyl)-anthranilate (PRA). The chain is Anthranilate phosphoribosyltransferase from Pelobacter propionicus (strain DSM 2379 / NBRC 103807 / OttBd1).